Reading from the N-terminus, the 655-residue chain is Probable inactive receptor kinase At1g48480 (655 aa).

The signal sequence occupies residues 1–32 (MRVFFFPNSSMAILSVFLSLLLLSLPLPSTQD). LRR repeat units follow at residues 71–95 (SNRV…IFGN), 98–120 (QLRT…LSTS), 122–144 (NLRH…LFSL), 146–169 (HLVR…TNLT), 170–192 (KLKT…DLPL), and 194–215 (QFNV…RFES). The interval 234 to 260 (EETVPSQPTSGGNRTPPSVEGSEEKKK) is disordered. Positions 237 to 249 (VPSQPTSGGNRTP) are enriched in polar residues. The helical transmembrane segment at 269-289 (IAGIVIGCVVGFALIVLILMV) threads the bilayer. A Protein kinase domain is found at 371 to 646 (RASAEVLGKG…RKMENLRPYS (276 aa)). Ser373 is subject to Phosphoserine. Residue 377–385 (LGKGTFGTA) participates in ATP binding. Residue Thr394 is modified to Phosphothreonine. Lys399 is an ATP binding site. Ser450 carries the phosphoserine modification. Residue Thr526 is modified to Phosphothreonine. Phosphoserine is present on Ser546. Thr622 carries the post-translational modification Phosphothreonine.

It belongs to the protein kinase superfamily. In terms of tissue distribution, highly expressed in seedlings and leaves. Lower expression in roots, stems, flowers and siliques. Detected in the vascular tissues of roots, in the trichomes of young rosettes leaves and hydathodes, in the floral abscission zones, in filament apex and stomata cells of anthers, in inflorescence stems and in sepals.

The protein resides in the cell membrane. The polypeptide is Probable inactive receptor kinase At1g48480 (RKL1) (Arabidopsis thaliana (Mouse-ear cress)).